Here is a 274-residue protein sequence, read N- to C-terminus: Thiamine kinase (274 aa).

This sequence belongs to the thiamine kinase family.

The enzyme catalyses thiamine + ATP = thiamine phosphate + ADP + H(+). Its pathway is cofactor biosynthesis; thiamine diphosphate biosynthesis; thiamine phosphate from thiamine: step 1/1. Functionally, catalyzes the ATP-dependent phosphorylation of thiamine to thiamine phosphate. Is involved in thiamine salvage. The sequence is that of Thiamine kinase from Shigella boydii serotype 4 (strain Sb227).